The primary structure comprises 473 residues: Sorting nexin-17 (473 aa).

One can recognise a PX domain in the interval 1 to 108 (MHFSIPETEV…SFLRKAQQET (108 aa)). A 1,2-diacyl-sn-glycero-3-phospho-(1D-myo-inositol-3-phosphate) is bound by residues R35, S37, K61, and R74. One can recognise a Ras-associating domain in the interval 114 to 205 (EEVQLEIYLS…YRIILRKSYW (92 aa)). The FERM-like stretch occupies residues 114–433 (EEVQLEIYLS…DPNREQVVKL (320 aa)). The tract at residues 269–433 (GYIKFDPCIT…DPNREQVVKL (165 aa)) is PTB-like F3 module. A disordered region spans residues 391 to 431 (SIKKQMQKKRLNGSLQRSDSQQAVKSPPILDSPDPNREQVV). The segment covering 403 to 414 (GSLQRSDSQQAV) has biased composition (polar residues).

It belongs to the sorting nexin family. Monomer. Interacts with CCDC22, CCDC93, DSCR3 and VPS35L; the interaction with DSCR3 is direct and associates SNX17 with the retriever and CCC complexes.

Its subcellular location is the cytoplasm. The protein localises to the early endosome. It is found in the cytoplasmic vesicle membrane. Functionally, critical regulator of endosomal recycling of numerous surface proteins, including integrins, signaling receptor and channels. Binds to NPxY sequences in the cytoplasmic tails of target cargos. Associates with retriever and CCC complexes to prevent lysosomal degradation and promote cell surface recycling of numerous cargos such as integrins ITGB1, ITGB5 and their associated alpha subunits. Also required for maintenance of normal cell surface levels of APP and LRP1. Interacts with membranes containing phosphatidylinositol 3-phosphate (PtdIns(3P)). The sequence is that of Sorting nexin-17 (snx17) from Danio rerio (Zebrafish).